Consider the following 253-residue polypeptide: Ubiquinone/menaquinone biosynthesis C-methyltransferase UbiE (253 aa).

S-adenosyl-L-methionine contacts are provided by residues Thr76, Asp97, and 125–126 (NA).

The protein belongs to the class I-like SAM-binding methyltransferase superfamily. MenG/UbiE family.

It catalyses the reaction a 2-demethylmenaquinol + S-adenosyl-L-methionine = a menaquinol + S-adenosyl-L-homocysteine + H(+). The enzyme catalyses a 2-methoxy-6-(all-trans-polyprenyl)benzene-1,4-diol + S-adenosyl-L-methionine = a 5-methoxy-2-methyl-3-(all-trans-polyprenyl)benzene-1,4-diol + S-adenosyl-L-homocysteine + H(+). The protein operates within quinol/quinone metabolism; menaquinone biosynthesis; menaquinol from 1,4-dihydroxy-2-naphthoate: step 2/2. It functions in the pathway cofactor biosynthesis; ubiquinone biosynthesis. Its function is as follows. Methyltransferase required for the conversion of demethylmenaquinol (DMKH2) to menaquinol (MKH2) and the conversion of 2-polyprenyl-6-methoxy-1,4-benzoquinol (DDMQH2) to 2-polyprenyl-3-methyl-6-methoxy-1,4-benzoquinol (DMQH2). This Rhodopseudomonas palustris (strain HaA2) protein is Ubiquinone/menaquinone biosynthesis C-methyltransferase UbiE.